The primary structure comprises 242 residues: Myogenic factor 6 (242 aa).

The tract at residues Ser31 to Leu63 is disordered. Positions Asp93 to Leu144 constitute a bHLH domain.

Efficient DNA binding requires dimerization with another bHLH protein.

Its subcellular location is the nucleus. Involved in muscle differentiation (myogenic factor). Induces fibroblasts to differentiate into myoblasts. Probable sequence specific DNA-binding protein. This Sus scrofa (Pig) protein is Myogenic factor 6 (MYF6).